The chain runs to 339 residues: Cathepsin B (339 aa).

The first 17 residues, 1-17, serve as a signal peptide directing secretion; it reads MWQLWASLCCLLVLANA. The propeptide at 18 to 79 is activation peptide; that stretch reads RSRPSFHPLS…QRVMFTEDLK (62 aa). 6 disulfide bridges follow: Cys93-Cys122, Cys105-Cys150, Cys141-Cys207, Cys142-Cys146, Cys179-Cys211, and Cys187-Cys198. The active site involves Cys108. The N-linked (GlcNAc...) asparagine glycan is linked to Asn192. An N6-acetyllysine modification is found at Lys220. Residues His278 and Asn298 contribute to the active site. The propeptide occupies 334–339; that stretch reads QYWEKI.

The protein belongs to the peptidase C1 family. As to quaternary structure, dimer of a heavy chain and a light chain cross-linked by a disulfide bond. Interacts with SRPX2. Directly interacts with SHKBP1. As to expression, expressed in the stratum spinosum of the epidermis. Weak expression is detected in the stratum granulosum.

It is found in the lysosome. The protein localises to the melanosome. It localises to the secreted. The protein resides in the extracellular space. Its subcellular location is the apical cell membrane. The catalysed reaction is Hydrolysis of proteins with broad specificity for peptide bonds. Preferentially cleaves -Arg-Arg-|-Xaa bonds in small molecule substrates (thus differing from cathepsin L). In addition to being an endopeptidase, shows peptidyl-dipeptidase activity, liberating C-terminal dipeptides.. Its activity is regulated as follows. Inhibited by leupeptin. Its function is as follows. Thiol protease which is believed to participate in intracellular degradation and turnover of proteins. Cleaves matrix extracellular phosphoglycoprotein MEPE. Involved in the solubilization of cross-linked TG/thyroglobulin in the thyroid follicle lumen. Has also been implicated in tumor invasion and metastasis. The chain is Cathepsin B (CTSB) from Homo sapiens (Human).